Reading from the N-terminus, the 928-residue chain is Heme/hemopexin-binding protein (928 aa).

A signal peptide spans 1–21 (MYKLNVISLIILTTCSGAAYA). A run of 10 repeats spans residues 101-106 (NGKVYL), 149-154 (KDRQVL), 155-160 (KEGLVL), 161-166 (KDGQVV), 167-172 (KEGQVI), 205-210 (NGKVYL), 279-284 (NGKVVL), 410-415 (NGKVNL), 635-640 (NGFVHL), and 674-679 (NGKVSM). The tract at residues 101-679 (NGKVYLANPN…RLGMNGKVSM (579 aa)) is 6 X 6 AA approximate repeats. The segment at 149-172 (KDRQVLKEGLVLKDGQVVKEGQVI) is 4 X 6 AA approximate tandem repeats.

The protein localises to the secreted. Its function is as follows. Binds heme/hemopexin complexes. This Haemophilus influenzae protein is Heme/hemopexin-binding protein (hxuA).